A 169-amino-acid chain; its full sequence is Putative phosphoesterase SSP1770 (169 aa).

His-34 serves as the catalytic Proton donor. 2 short sequence motifs (HXTX) span residues 34–37 (HITI) and 115–118 (HFTI). Residue His-115 is the Proton acceptor of the active site.

It belongs to the 2H phosphoesterase superfamily. YjcG family.

This is Putative phosphoesterase SSP1770 from Staphylococcus saprophyticus subsp. saprophyticus (strain ATCC 15305 / DSM 20229 / NCIMB 8711 / NCTC 7292 / S-41).